The following is a 221-amino-acid chain: Serine/arginine-rich splicing factor 2 (221 aa).

The RRM domain occupies 14–92 (TSLKVDNLTY…RELRVQMARY (79 aa)). Positions 91–221 (RYGRPPDSHH…SPEEEGAVSS (131 aa)) are disordered. Basic residues-rich tracts occupy residues 117 to 171 (RRSR…RSKS) and 179 to 189 (SRSRSRSRSRS).

The protein belongs to the splicing factor SR family. Extensively phosphorylated on serine residues in the RS domain.

The protein resides in the nucleus. In terms of biological role, necessary for the splicing of pre-mRNA. It is required for formation of the earliest ATP-dependent splicing complex and interacts with spliceosomal components bound to both the 5'- and 3'-splice sites during spliceosome assembly. It also is required for ATP-dependent interactions of both U1 and U2 snRNPs with pre-mRNA. The polypeptide is Serine/arginine-rich splicing factor 2 (SRSF2) (Gallus gallus (Chicken)).